The sequence spans 262 residues: Zinc import ATP-binding protein ZnuC (262 aa).

The 216-residue stretch at 5 to 220 folds into the ABC transporter domain; that stretch reads IELQDICVDF…PSYLAMFGHR (216 aa). Residue 37–44 participates in ATP binding; sequence GPNGAGKS.

The protein belongs to the ABC transporter superfamily. Zinc importer (TC 3.A.1.15.5) family. As to quaternary structure, the complex is composed of two ATP-binding proteins (ZnuC), two transmembrane proteins (ZnuB) and a solute-binding protein (ZnuA).

Its subcellular location is the cell inner membrane. It carries out the reaction Zn(2+)(out) + ATP(in) + H2O(in) = Zn(2+)(in) + ADP(in) + phosphate(in) + H(+)(in). Part of the ABC transporter complex ZnuABC involved in zinc import. Responsible for energy coupling to the transport system. This chain is Zinc import ATP-binding protein ZnuC, found in Vibrio cholerae serotype O1 (strain ATCC 39315 / El Tor Inaba N16961).